The sequence spans 61 residues: Photosystem II assembly protein Psb34 (61 aa).

The chain crosses the membrane as a helical span at residues 36-56; that stretch reads LIMAAITVVLVAGLIAVAVVA.

This sequence belongs to the Psb34 family. In terms of assembly, part of the photosystem II (PSII) assembly intermediate RC47 complex (with D1, D2, CP47, PsbE, PsbF, PsbH, Psb27 and Psb28); minor amounts are found in other PSII complexes, including mature, dimeric PSII with PsbO and PsbV. No HliA or HliB are detected in any of these complexes. Its interaction with PSII requires both CP47 (psbB) and PsbH. HliA/HliB and Psb34 probably bind to a similar site on CP47; their binding seems to be mutually exclusive.

Its subcellular location is the cellular thylakoid membrane. Functionally, involved in photosystem II (PSII) assembly and/or repair. Probably involved in conversion of late PSII assembly intermediates into mature dimeric PSII, it may mediate the optimal equlibrium of HliA/HliB among the intermediates containing CP47 (psbB) to facilitate photoprotection during assembly. This is Photosystem II assembly protein Psb34 from Synechocystis sp. (strain ATCC 27184 / PCC 6803 / Kazusa).